A 332-amino-acid chain; its full sequence is uncharacterized protein (332 aa).

Residues 185–205 (MVYGYSVFNAFFILLALPNVI) traverse the membrane as a helical segment.

It localises to the host membrane. This is an uncharacterized protein from Sulfolobus islandicus filamentous virus (isolate Iceland/Hveragerdi) (SIFV).